Consider the following 1064-residue polypeptide: Fibropellin-1 (1064 aa).

The signal sequence occupies residues 1-19; sequence MRTWLLAVLLLSVIAVTYG. The 36-residue stretch at 20–55 folds into the EGF-like 1 domain; the sequence is QGECDSDPCENGSTCQEGEGSYICQCPMGYDGQNCD. Intrachain disulfides connect Cys23–Cys34, Cys28–Cys43, Cys45–Cys54, and Cys62–Cys88. The N-linked (GlcNAc...) asparagine glycan is linked to Asn30. Residues 62–175 form the CUB domain; it reads CGYNVFDANG…NRGFRITFSS (114 aa). N-linked (GlcNAc...) asparagine glycosylation occurs at Asn136. Positions 176 to 212 constitute an EGF-like 2; calcium-binding domain; it reads DGDDCDPNLCQNGAACTDLVNDYACTCPPGFTGRNCE. Intrachain disulfides connect Cys180–Cys191, Cys185–Cys200, Cys202–Cys211, Cys218–Cys229, Cys223–Cys238, Cys240–Cys249, Cys256–Cys267, Cys261–Cys276, Cys278–Cys287, Cys294–Cys305, Cys299–Cys314, Cys316–Cys325, Cys332–Cys343, Cys337–Cys352, Cys354–Cys363, Cys370–Cys381, Cys375–Cys390, Cys392–Cys401, Cys408–Cys419, Cys413–Cys428, Cys430–Cys439, Cys446–Cys457, Cys451–Cys466, Cys468–Cys477, Cys484–Cys495, Cys489–Cys504, Cys506–Cys515, Cys522–Cys533, Cys527–Cys542, Cys544–Cys553, Cys560–Cys571, Cys565–Cys580, Cys582–Cys591, Cys598–Cys609, Cys603–Cys618, Cys620–Cys629, Cys636–Cys647, Cys641–Cys656, Cys658–Cys667, Cys674–Cys685, Cys679–Cys694, Cys696–Cys705, Cys712–Cys723, Cys717–Cys732, Cys734–Cys743, Cys750–Cys761, Cys755–Cys770, Cys772–Cys781, Cys788–Cys799, Cys793–Cys808, Cys810–Cys819, Cys826–Cys837, Cys831–Cys846, Cys848–Cys857, Cys864–Cys875, Cys869–Cys884, Cys886–Cys895, Cys902–Cys913, Cys907–Cys922, Cys924–Cys933, and Cys939–Cys1015. In terms of domain architecture, EGF-like 3; calcium-binding spans 214-250; it reads DIDECASDPCQNGGACVDGVNGYVCNCVPGFDGDECE. In terms of domain architecture, EGF-like 4; calcium-binding spans 252–288; sequence NINECASSPCLNGGICVDGVNMFECTCLAGFTGVRCE. Positions 290-326 constitute an EGF-like 5; calcium-binding domain; the sequence is NIDECASAPCQNGGICIDGINGYTCSCPLGFSGDNCE. Residues 328 to 364 form the EGF-like 6; calcium-binding domain; sequence NDDECSSIPCLNGGTCVDLVNAYMCVCAPGWTGPTCA. Residues 366–402 enclose the EGF-like 7; calcium-binding domain; sequence NIDECASAPCQNGGVCIDGVNGYMCDCQPGYTGTHCE. An EGF-like 8; calcium-binding domain is found at 404 to 440; that stretch reads DIDECARPPCQNGGDCVDGVNGYVCICAPGFDGLNCE. Residues 442 to 478 enclose the EGF-like 9; calcium-binding domain; it reads NIDECASRPCQNGAVCVDGVNGFVCTCSAGYTGVLCE. The 37-residue stretch at 480–516 folds into the EGF-like 10; calcium-binding domain; that stretch reads DINECASMPCLNGGVCTDLVNGYICTCAAGFEGTNCE. In terms of domain architecture, EGF-like 11; calcium-binding spans 518-554; it reads DTDECASFPCQNGATCTDQVNGYVCTCVPGYTGVLCE. Positions 556–592 constitute an EGF-like 12; calcium-binding domain; the sequence is DINECASFPCLNGGTCNDQVNGYVCVCAQDTSVSTCE. The EGF-like 13; calcium-binding domain occupies 594–630; sequence DRDECASAPCLNGGACMDVVNGFVCTCLPGWEGTNCE. One can recognise an EGF-like 14; calcium-binding domain in the interval 632–668; it reads NTDECASSPCMNGGLCVDQVNSYVCFCLPGFTGIHCG. One can recognise an EGF-like 15; calcium-binding domain in the interval 670–706; it reads EIDECASSPCLNGGQCIDRVDSYECVCAAGYTAVRCQ. Positions 708–744 constitute an EGF-like 16; calcium-binding domain; it reads NIDECASAPCQNGGVCVDGVNGYVCNCAPGYTGDNCE. An EGF-like 17; calcium-binding domain is found at 746–782; it reads EIDECASMPCLNGGACIEMVNGYTCQCVAGYTGVICE. In terms of domain architecture, EGF-like 18; calcium-binding spans 784 to 820; sequence DIDECASAPCQNGGVCTDTINGYICACVPGFTGSNCE. In terms of domain architecture, EGF-like 19; calcium-binding spans 822 to 858; it reads NIDECASDPCLNGGICVDGVNGFVCQCPPNYSGTYCE. The N-linked (GlcNAc...) asparagine glycan is linked to Asn851. The EGF-like 20 domain maps to 860–896; sequence SLDACRSMPCQNGATCVNVGADYVCECVPGYAGQNCE. The region spanning 898–934 is the EGF-like 21; calcium-binding domain; that stretch reads DINECASLPCQNGGLCIDGIAGYTCQCRLGYIGVNCE. The region spanning 937-1056 is the Avidin-like domain; it reads GFCDLEGMWY…GQDKWTRYEQ (120 aa).

As to quaternary structure, homotetramer.

Its subcellular location is the secreted. It is found in the extracellular space. The protein resides in the cytoplasmic vesicle. The protein localises to the extracellular matrix. It localises to the hyaline layer. Its subcellular location is the apical lamina. Its function is as follows. Forms the apical lamina, a component of the extracellular matrix. In Strongylocentrotus purpuratus (Purple sea urchin), this protein is Fibropellin-1 (EGF1).